Here is a 245-residue protein sequence, read N- to C-terminus: MKKILAEIAYDGSLYHGFQIQPTKPTIQGEIEKALEKINKTKVKIQSAGRTDKGVHAKRQIISFYIKININLKNLKTAINSLLKNDIRIIKLKYVSNEFQPRFHAKKRKYTYYILNNENHYPWEEYQAYYVRKKLNINRLNTMAEMLIGLHDFTTFSCIRDQTNSKLKEIYLAKFKKKNKFIVFEIIGSSFLWKMVRSIVGTMIDIEIKNESVDTFIKILKSKNRKYARTTAPAKALFLDRVFYE.

Asp-52 (nucleophile) is an active-site residue. Position 110 (Tyr-110) interacts with substrate.

This sequence belongs to the tRNA pseudouridine synthase TruA family. As to quaternary structure, homodimer.

The enzyme catalyses uridine(38/39/40) in tRNA = pseudouridine(38/39/40) in tRNA. Functionally, formation of pseudouridine at positions 38, 39 and 40 in the anticodon stem and loop of transfer RNAs. The chain is tRNA pseudouridine synthase A from Borrelia duttonii (strain Ly).